The chain runs to 618 residues: Mitochondrial Rho GTPase 2 (618 aa).

At 1 to 592 (MRRDVRILLL…ELHPSSFWLR (592 aa)) the chain is on the cytoplasmic side. One can recognise a Miro 1 domain in the interval 2–168 (RRDVRILLLG…FYYAQKAVLH (167 aa)). Gly-16, Lys-17, Thr-18, and Ser-19 together coordinate GTP. Residue Thr-18 participates in Mg(2+) binding. Mg(2+)-binding residues include Pro-35 and Asp-57. Ser-59 lines the GTP pocket. A Glycyl lysine isopeptide (Lys-Gly) (interchain with G-Cter in ubiquitin) cross-link involves residue Lys-96. GTP-binding residues include Asn-118, Lys-119, Asp-121, Ala-149, and Lys-150. A Glycyl lysine isopeptide (Lys-Gly) (interchain with G-Cter in ubiquitin) cross-link involves residue Lys-119. Lys-164 is covalently cross-linked (Glycyl lysine isopeptide (Lys-Gly) (interchain with G-Cter in ubiquitin)). 2 consecutive EF-hand domains span residues 184-219 (ACAQALTRIFRLSDQDLDQALSDEELNAFQKSCFGH) and 304-339 (LGYQFVQRVFEKHDQDRDGALSPVELQSLFSVFPAA). The Ca(2+) site is built by Asp-197, Asp-199, Asp-201, Glu-208, Asp-317, Asp-319, Asp-321, and Glu-328. Residues 414–576 (RSVLLCKVVG…FTQLATMAAF (163 aa)) enclose the Miro 2 domain. Positions 426, 428, 429, 430, and 431 each coordinate GTP. The GDP site is built by Gly-426, Gly-428, Lys-429, Ser-430, and Ala-431. Ser-430 serves as a coordination point for Mg(2+). Glu-471 contributes to the Mg(2+) binding site. The GTP site is built by Lys-525, Asp-527, and Cys-556. 3 residues coordinate GDP: Lys-525, Asp-527, and Cys-556. A helical; Anchor for type IV membrane protein membrane pass occupies residues 593–615 (GLLGVVGAAVAAVLSFSLYRVLV). Residues 616-618 (KSQ) lie on the Mitochondrial intermembrane side of the membrane.

The protein belongs to the mitochondrial Rho GTPase family. As to quaternary structure, homodimer. Interacts with the kinesin-binding proteins TRAK1/OIP106 and TRAK2/GRIF1, forming a link between mitochondria and the trafficking apparatus of the microtubules. Interacts with ARMCX3. Found in a complex with KIF5B, OGT, RHOT1 and TRAK1. Post-translationally, ubiquitinated by PRKN in a PINK1-dependent manner, leading to its degradation. In terms of tissue distribution, ubiquitously expressed. Highly expressed in heart, liver, skeletal muscle, kidney and pancreas.

It is found in the mitochondrion outer membrane. It carries out the reaction GTP + H2O = GDP + phosphate + H(+). The catalysed reaction is ATP + H2O = ADP + phosphate + H(+). It catalyses the reaction UTP + H2O = UDP + phosphate + H(+). Atypical mitochondrial nucleoside-triphosphatase (NTPase) involved in mitochondrial trafficking. Probably involved in control of anterograde transport of mitochondria and their subcellular distribution. Can hydrolyze GTP. Can hydrolyze ATP and UTP. The protein is Mitochondrial Rho GTPase 2 (RHOT2) of Homo sapiens (Human).